The sequence spans 135 residues: C-type lectin Cal (135 aa).

4 cysteine pairs are disulfide-bonded: C3–C14, C31–C131, C38–C133, and C106–C123. The C-type lectin domain maps to 10–132; that stretch reads MNGLCYKIFN…CESKDAFLCQ (123 aa). Q96, D98, E104, N119, and D120 together coordinate Ca(2+). The Galactose-binding motif lies at 96–98; sequence QPD.

The protein belongs to the true venom lectin family. Homodecamer of disulfide-linked dimers arranged in two pseudo-5-fold symmetric pentamers. Expressed by the venom gland.

It is found in the secreted. Galactose-binding protein which recognizes specific carbohydrate structures and agglutinates a variety of animal cells by binding to cell-surface glycoproteins and glycolipids. Calcium-dependent lectin. Shows high hemagglutinating activity (MHC=10 ng/ml). The sequence is that of C-type lectin Cal from Crotalus atrox (Western diamondback rattlesnake).